Consider the following 207-residue polypeptide: Ribonuclease HII (207 aa).

Residues 20-207 form the RNase H type-2 domain; that stretch reads QLFAGVDEVG…KPVKRVLGIE (188 aa). A divalent metal cation-binding residues include Asp-26, Glu-27, and Asp-118.

This sequence belongs to the RNase HII family. Mn(2+) is required as a cofactor. It depends on Mg(2+) as a cofactor.

It is found in the cytoplasm. It catalyses the reaction Endonucleolytic cleavage to 5'-phosphomonoester.. In terms of biological role, endonuclease that specifically degrades the RNA of RNA-DNA hybrids. The protein is Ribonuclease HII of Aliivibrio salmonicida (strain LFI1238) (Vibrio salmonicida (strain LFI1238)).